Here is a 319-residue protein sequence, read N- to C-terminus: Zinc finger protein C19B12.07c (319 aa).

The C2H2-type zinc finger occupies Phe146 to His170.

This sequence belongs to the ZNF277 family.

Its subcellular location is the nucleus. The polypeptide is Zinc finger protein C19B12.07c (Schizosaccharomyces pombe (strain 972 / ATCC 24843) (Fission yeast)).